A 264-amino-acid polypeptide reads, in one-letter code: Thymidylate synthase (264 aa).

DUMP-binding positions include Arg-21 and 126 to 127 (RR). Residue Cys-146 is the Nucleophile of the active site. DUMP contacts are provided by residues 166–169 (RSAD), Asn-177, and 207–209 (HLY). Asp-169 contacts (6R)-5,10-methylene-5,6,7,8-tetrahydrofolate. Ala-263 lines the (6R)-5,10-methylene-5,6,7,8-tetrahydrofolate pocket.

It belongs to the thymidylate synthase family. Bacterial-type ThyA subfamily. As to quaternary structure, homodimer.

The protein localises to the cytoplasm. The enzyme catalyses dUMP + (6R)-5,10-methylene-5,6,7,8-tetrahydrofolate = 7,8-dihydrofolate + dTMP. It functions in the pathway pyrimidine metabolism; dTTP biosynthesis. In terms of biological role, catalyzes the reductive methylation of 2'-deoxyuridine-5'-monophosphate (dUMP) to 2'-deoxythymidine-5'-monophosphate (dTMP) while utilizing 5,10-methylenetetrahydrofolate (mTHF) as the methyl donor and reductant in the reaction, yielding dihydrofolate (DHF) as a by-product. This enzymatic reaction provides an intracellular de novo source of dTMP, an essential precursor for DNA biosynthesis. This chain is Thymidylate synthase, found in Rhodopseudomonas palustris (strain BisB5).